The following is a 205-amino-acid chain: Holliday junction branch migration complex subunit RuvA (205 aa).

The tract at residues 1–65 is domain I; that stretch reads MIGRLRGAVA…SAGLRLYGFL (65 aa). Residues 66–144 form a domain II region; it reads TREDRRAFVL…TDGPVLMSAP (79 aa). Residues 145–153 form a flexible linker region; that stretch reads TSSAPSAPA. Positions 153-205 are domain III; the sequence is AKPAPTGDAVAALMGLGVAEVNARRVVEAAAAELGEEATVQALIKAGLKELGR.

It belongs to the RuvA family. As to quaternary structure, homotetramer. Forms an RuvA(8)-RuvB(12)-Holliday junction (HJ) complex. HJ DNA is sandwiched between 2 RuvA tetramers; dsDNA enters through RuvA and exits via RuvB. An RuvB hexamer assembles on each DNA strand where it exits the tetramer. Each RuvB hexamer is contacted by two RuvA subunits (via domain III) on 2 adjacent RuvB subunits; this complex drives branch migration. In the full resolvosome a probable DNA-RuvA(4)-RuvB(12)-RuvC(2) complex forms which resolves the HJ.

The protein localises to the cytoplasm. The RuvA-RuvB-RuvC complex processes Holliday junction (HJ) DNA during genetic recombination and DNA repair, while the RuvA-RuvB complex plays an important role in the rescue of blocked DNA replication forks via replication fork reversal (RFR). RuvA specifically binds to HJ cruciform DNA, conferring on it an open structure. The RuvB hexamer acts as an ATP-dependent pump, pulling dsDNA into and through the RuvAB complex. HJ branch migration allows RuvC to scan DNA until it finds its consensus sequence, where it cleaves and resolves the cruciform DNA. The chain is Holliday junction branch migration complex subunit RuvA from Caulobacter vibrioides (strain ATCC 19089 / CIP 103742 / CB 15) (Caulobacter crescentus).